The following is a 556-amino-acid chain: 2-succinyl-5-enolpyruvyl-6-hydroxy-3-cyclohexene-1-carboxylate synthase (556 aa).

This sequence belongs to the TPP enzyme family. MenD subfamily. In terms of assembly, homodimer. It depends on Mg(2+) as a cofactor. Requires Mn(2+) as cofactor. The cofactor is thiamine diphosphate.

It carries out the reaction isochorismate + 2-oxoglutarate + H(+) = 5-enolpyruvoyl-6-hydroxy-2-succinyl-cyclohex-3-ene-1-carboxylate + CO2. The protein operates within quinol/quinone metabolism; 1,4-dihydroxy-2-naphthoate biosynthesis; 1,4-dihydroxy-2-naphthoate from chorismate: step 2/7. It functions in the pathway quinol/quinone metabolism; menaquinone biosynthesis. Its function is as follows. Catalyzes the thiamine diphosphate-dependent decarboxylation of 2-oxoglutarate and the subsequent addition of the resulting succinic semialdehyde-thiamine pyrophosphate anion to isochorismate to yield 2-succinyl-5-enolpyruvyl-6-hydroxy-3-cyclohexene-1-carboxylate (SEPHCHC). The chain is 2-succinyl-5-enolpyruvyl-6-hydroxy-3-cyclohexene-1-carboxylate synthase from Salmonella typhi.